The sequence spans 429 residues: Cell wall protein ECM33 (429 aa).

A signal peptide spans 1 to 19; the sequence is MQFKNALTATAILSASALA. N-linked (GlcNAc...) asparagine glycans are attached at residues Asn21, Asn56, Asn82, Asn196, Asn209, Asn227, Asn234, Asn241, Asn267, Asn279, Asn304, and Asn328. At Ser339 the chain carries Phosphoserine. The span at 361-401 shows a compositional bias: low complexity; the sequence is LSSTSTESSKSSATSSASSSGDASNAQANVSASASSSSSSS. Residues 361–410 are disordered; it reads LSSTSTESSKSSATSSASSSGDASNAQANVSASASSSSSSSKKSKGAAPE. Asn389 carries an N-linked (GlcNAc...) asparagine glycan. Residue Gly406 is the site of GPI-anchor amidated glycine attachment. The propeptide at 407-429 is removed in mature form; sequence AAPELVPATSFMGVVAAVGVALL.

It belongs to the SPS2 family. Post-translationally, the GPI-anchor is attached to the protein in the endoplasmic reticulum and serves to target the protein to the cell surface. There, the glucosamine-inositol phospholipid moiety is cleaved off and the GPI-modified mannoprotein is covalently attached via its lipidless GPI glycan remnant to the 1,6-beta-glucan of the outer cell wall layer. In terms of processing, extensively N-glycosylated.

The protein localises to the cell membrane. The protein resides in the secreted. Its subcellular location is the cell wall. Its function is as follows. Required for proper cell wall integrity and for the correct assembly of the mannoprotein outer layer of the cell wall. Important for apical bud growth. This is Cell wall protein ECM33 (ECM33) from Saccharomyces cerevisiae (strain ATCC 204508 / S288c) (Baker's yeast).